The chain runs to 430 residues: Adenylosuccinate synthetase (430 aa).

GTP is bound by residues 12–18 and 40–42; these read GDEGKGK and GHT. Aspartate 13 functions as the Proton acceptor in the catalytic mechanism. Mg(2+) contacts are provided by aspartate 13 and glycine 40. IMP is bound by residues 13–16, 38–41, threonine 128, arginine 142, glutamine 223, threonine 238, and arginine 302; these read DEGK and NAGH. The Proton donor role is filled by histidine 41. Position 298–304 (298–304) interacts with substrate; the sequence is TTTGRPR. Residues arginine 304, 330-332, and 412-414 contribute to the GTP site; these read SID and SVG.

The protein belongs to the adenylosuccinate synthetase family. As to quaternary structure, homodimer. It depends on Mg(2+) as a cofactor.

It is found in the cytoplasm. It carries out the reaction IMP + L-aspartate + GTP = N(6)-(1,2-dicarboxyethyl)-AMP + GDP + phosphate + 2 H(+). The protein operates within purine metabolism; AMP biosynthesis via de novo pathway; AMP from IMP: step 1/2. Functionally, plays an important role in the de novo pathway of purine nucleotide biosynthesis. Catalyzes the first committed step in the biosynthesis of AMP from IMP. The sequence is that of Adenylosuccinate synthetase from Exiguobacterium sibiricum (strain DSM 17290 / CCUG 55495 / CIP 109462 / JCM 13490 / 255-15).